We begin with the raw amino-acid sequence, 326 residues long: Tetraketide alpha-pyrone reductase 1 (326 aa).

Residues 8 to 32, lysine 44, and tyrosine 162 contribute to the NADP(+) site; that span reads VCVTGASGFLASWLVKRLLLEGYEV.

This sequence belongs to the NAD(P)-dependent epimerase/dehydratase family. Dihydroflavonol-4-reductase subfamily. As to quaternary structure, interacts with 4CLL1/ACOS5, PKSA and PKSB. In terms of tissue distribution, specifically expressed in anther tapetal cells during microspores development.

The protein localises to the cytoplasm. Its subcellular location is the nucleus. The protein resides in the endoplasmic reticulum. In terms of biological role, involved in the biosynthesis of hydroxylated tetraketide compounds that serve as sporopollenin precursors (the main constituents of exine). Is essential for pollen wall development. Acts on tetraketide alpha-pyrones and reduces the carbonyl function on the tetraketide alkyl chain to a secondary alcohol function. This chain is Tetraketide alpha-pyrone reductase 1 (TKPR1), found in Arabidopsis thaliana (Mouse-ear cress).